Consider the following 236-residue polypeptide: tRNA (guanine-N(1)-)-methyltransferase (236 aa).

S-adenosyl-L-methionine-binding positions include Gly116 and 136–141; that span reads LGDFVL.

Belongs to the RNA methyltransferase TrmD family. In terms of assembly, homodimer.

It is found in the cytoplasm. It catalyses the reaction guanosine(37) in tRNA + S-adenosyl-L-methionine = N(1)-methylguanosine(37) in tRNA + S-adenosyl-L-homocysteine + H(+). In terms of biological role, specifically methylates guanosine-37 in various tRNAs. The protein is tRNA (guanine-N(1)-)-methyltransferase of Thiobacillus denitrificans (strain ATCC 25259 / T1).